A 299-amino-acid polypeptide reads, in one-letter code: MSEHTDVLVLGGAGVDTIAYVPELPLPFQDSYVVAAIEPRAGQTGDNVALGLHTLGLRTMHVDVLGDDPEGDLVRAFHTRHGLPFAALPTAAGTKRAVNLVGPDGRRLSLWDGSREAEEDRYPAALIAAHTAHARHVHVCITPPGQHVFGQLNDLPVTVSTDLHNWDGAYEGFEVYAFNADLVFLSATALTDVAATMRRVIDRGRARLVVATDGAHGGSVLVRGETEVRRYAAVAPEAPVVDSNGAGDAFVSGFLFGHLAGEPLETCLRYGAIAGAYACTIPATRAGAIDRAALLRPAA.

Belongs to the carbohydrate kinase PfkB family.

The catalysed reaction is acarbose + ATP = acarbose 7(IV)-phosphate + ADP + H(+). Its function is as follows. Catalyzes the phosphorylation of the alpha-glucosidase inhibitor acarbose. Phosphorylation of acarbose could be a resistance-like self-protection mechanism. This is Acarbose 7(IV)-phosphotransferase from Actinoplanes sp. (strain ATCC 31044 / CBS 674.73 / SE50/110).